Consider the following 554-residue polypeptide: Afadin- and alpha-actinin-binding protein A (554 aa).

Coiled-coil stretches lie at residues 122–287 and 359–449; these read LEYL…SQRK and ENGL…AIRL. Residues 508–528 are disordered; it reads LASSGDYSRRPSKALPITSSS.

It belongs to the ADIP family. Interacts with WRAP73.

It is found in the cell junction. It localises to the adherens junction. The protein resides in the cytoplasm. The protein localises to the cytoskeleton. Its subcellular location is the microtubule organizing center. It is found in the centrosome. It localises to the centriolar satellite. Belongs to an adhesion system, which plays a role in the organization of homotypic, interneuronal and heterotypic cell-cell adherens junctions (AJs). Involved in cell movement. Acts as a centrosome maturation factor, probably by maintaining the integrity of the pericentriolar material and proper microtubule nucleation at mitotic spindle poles. The function seems to implicate at least in part WRAP73; the SSX2IP:WRAP73 complex is proposed to act as regulator of spindle anchoring at the mitotic centrosome. The protein is Afadin- and alpha-actinin-binding protein A (ssx2ip-a) of Xenopus laevis (African clawed frog).